Here is a 3801-residue protein sequence, read N- to C-terminus: MSTDSNSLAREFLTDVNRLCNAVVQRVEAREEEEEETHMATLGQYLVHGRGFLLLTKLNSIIDQALTCREELLTLLLSLLPLVWKIPVQEEKATDFNLPLSADIILTKEKNSSSQRSTQEKLHLEGSALSSQVSAKVNVFRKSRRQRKITHRYSVRDARKTQLSTSDSEANSDEKGIAMNKHRRPHLLHHFLTSFPKQDHPKAKLDRLATKEQTPPDAMALENSREIIPRQGSNTDILSEPAALSVISNMNNSPFDLCHVLLSLLEKVCKFDVTLNHNSPLAASVVPTLTEFLAGFGDCCSLSDNLESRVVSAGWTEEPVALIQRMLFRTVLHLLSVDVSTAEMMPENLRKNLTELLRAALKIRICLEKQPDPFAPRQKKTLQEVQEDFVFSKYRHRALLLPELLEGVLQILICCLQSAASNPFYFSQAMDLVQEFIQHHGFNLFETAVLQMEWLVLRDGVPPEASEHLKALINSVMKIMSTVKKVKSEQLHHSMCTRKRHRRCEYSHFMHHHRDLSGLLVSAFKNQVSKNPFEETADGDVYYPERCCCIAVCAHQCLRLLQQASLSSTCVQILSGVHNIGICCCMDPKSVIIPLLHAFKLPALKNFQQHILNILNKLILDQLGGAEISPKIKKAACNICTVDSDQLAQLEETLQGNLCDAELSSSLSSPSYRFQGILPSSGSEDLLWKWDALKAYQNFVFEEDRLHSIQIANHICNLIQKGNIVVQWKLYNYIFNPVLQRGVELAHHCQHLSVTSAQSHVCSHHNQCLPQDVLQIYVKTLPILLKSRVIRDLFLSCNGVSQIIELNCLNGIRSHSLKAFETLIISLGEQQKDASVPDIDGIDIEQKELSSVHVGTSFHHQQAYSDSPQSLSKFYAGLKEAYPKRRKTVNQDVHINTINLFLCVAFLCVSKEAESDRESANDSEDTSGYDSTASEPLSHMLPCISLESLVLPSPEHMHQAADIWSMCRWIYMLSSVFQKQFYRLGGFRVCHKLIFMIIQKLFRSHKEEQGKKEGDTSVNENQDLNRISQPKRTMKEDLLSLAIKSDPIPSELGSLKKSADSLGKLELQHISSINVEEVSATEAAPEEAKLFTSQESETSLQSIRLLEALLAICLHGARTSQQKMELELPNQNLSVESILFEMRDHLSQSKVIETQLAKPLFDALLRVALGNYSADFEHNDAMTEKSHQSAEELSSQPGDFSEEAEDSQCCSFKLLVEEEGYEADSESNPEDGETQDDGVDLKSETEGFSASSSPNDLLENLTQGEIIYPEICMLELNLLSASKAKLDVLAHVFESFLKIIRQKEKNVFLLMQQGTVKNLLGGFLSILTQDDSDFQACQRVLVDLLVSLMSSRTCSEELTLLLRIFLEKSPCTKILLLGILKIIESDTTMSPSQYLTFPLLHAPNLSNGVSSQKYPGILNSKAMGLLRRARVSRSKKEADRESFPHRLLSSWHIAPVHLPLLGQNCWPHLSEGFSVSLWFNVECIHEAESTTEKGKKIKKRNKSLILPDSSFDGTESDRPEGAEYINPGERLIEEGCIHIISLGSKALMIQVWADPHNATLIFRVCMDSNDDMKAVLLAQVESQENIFLPSKWQHLVLTYLQQPQGKRRIHGKISIWVSGQRKPDVTLDFMLPRKTSLSSDSNKTFCMIGHCLSSQEEFLQLAGKWDLGNLLLFNGAKVGSQEAFYLYACGPNHTSVMPCKYGKPVNDYSKYINKEILRCEQIRELFMTKKDVDIGLLIESLSVVYTTYCPAQYTIYEPVIRLKGQMKTQLSQRPFSSKEVQSILLEPHHLKNLQPTEYKTIQGILHEIGGTGIFVFLFARVVELSSCEETQALALRVILSLIKYNQQRVHELENCNGLSMIHQVLIKQKCIVGFYILKTLLEGCCGEDIIYMNENGEFKLDVDSNAIIQDVKLLEELLLDWKIWSKAEQGVWETLLAALEVLIRADHHQQMFNIKQLLKAQVVHHFLLTCQVLQEYKEGQLTPMPREVCRSFVKIIAEVLGSPPDLELLTIIFNFLLAVHPPTNTYVCHNPTNFYFSLHIDGKIFQEKVRSIMYLRHSSSGGRSLMSPGFMVISPSGFTASPYEGENSSNIIPQQMAAHMLRSRSLPAFPTSSLLTQSQKLTGSLGCSIDRLQNIADTYVATQSKKQNSLGSSDTLKKGKEDAFISSCESAKTVCEMEAVLSAQVSVSDVPKGVLGFPVVKADHKQLGAEPRSEDDSPGDESCPRRPDYLKGLASFQRSHSTIASLGLAFPSQNGSAAVGRWPSLVDRNTDDWENFAYSLGYEPNYNRTASAHSVTEDCLVPICCGLYELLSGVLLILPDVLLEDVMDKLIQADTLLVLVNHPSPAIQQGVIKLLDAYFARASKEQKDKFLKNRGFSLLANQLYLHRGTQELLECFIEMFFGRHIGLDEEFDLEDVRNMGLFQKWSVIPILGLIETSLYDNILLHNALLLLLQILNSCSKVADMLLDNGLLYVLCNTVAALNGLEKNIPMSEYKLLACDIQQLFIAVTIHACSSSGSQYFRVIEDLIVMLGYLQNSKNKRTQNMAVALQLRVLQAAMEFIRTTANHDSENLTDSLQSPSAPHHAVVQKRKSIAGPRKFPLAQTESLLMKMRSVANDELHVMMQRRMSQENPSQATETELAQRLQRLTVLAVNRIIYQEFNSDIIDILRTPENVTQSKTSVFQTEISEENIHHEQSSVFNPFQKEIFTYLVEGFKVSIGSSKASGSKQQWTKILWSCKETFRMQLGRLLVHILSPAHAAQERKQIFEIVHEPNHQEILRDCLSPSLQHGAKLVLYLSELIHNHQGELTEEELGTAELLMNALKLCGHKCIPPSASTKADLIKMIKEEQKKYETEEGVNKAAWQKTVNNNQQSLFQRLDSKSKDISKIAADITQAVSLSQGNERKKVIQHIRGMYKVDLSASRHWQELIQQLTHDRAVWYDPIYYPTSWQLDPTEGPNRERRRLQRCYLTIPNKYLLRDRQKSEDVVKPPLSYLFEDKTHSSFSSTVKDKAASESIRVNRRCISVAPSRETAGELLLGKCGMYFVEDNASDTVESSSLQGELEPASFSWTYEEIKEVHKRWWQLRDNAVEIFLTNGRTLLLAFDNTKVRDDVYHNILTNNLPNLLEYGNITALTNLWYTGQITNFEYLTHLNKHAGRSFNDLMQYPVFPFILADYVSETLDLNDLLIYRNLSKPIAVQYKEKEDRYVDTYKYLEEEYRKGAREDDPMPPVQPYHYGSHYSNSGTVLHFLVRMPPFTKMFLAYQDQSFDIPDRTFHSTNTTWRLSSFESMTDVKELIPEFFYLPEFLVNREGFDFGVRQNGERVNHVNLPPWARNDPRLFILIHRQALESDYVSQNICQWIDLVFGYKQKGKASVQAINVFHPATYFGMDVSAVEDPVQRRALETMIKTYGQTPRQLFHMAHVSRPGAKLNIEGELPAAVGLLVQFAFRETREQVKEITYPSPLSWIKGLKWGEYVGSPSAPVPVVCFSQPHGERFGSLQALPTRAICGLSRNFCLLMTYSKEQGVRSMNSTDIQWSAILSWGYADNILRLKSKQSEPPVNFIQSSQQYQVTSCAWVPDSCQLFTGSKCGVITAYTNRFTSSTPSEIEMETQIHLYGHTEEITSLFVCKPYSILISVSRDGTCIIWDLNRLCYVQSLAGHKSPVTAVSASETSGDIATVCDSAGGGSDLRLWTVNGDLVGHVHCREIICSVAFSNQPEGVSINVIAGGLENGIVRLWSTWDLKPVREITFPKSNKPIISLTFSCDGHHLYTANSDGTVIAWCRKDQQRLKQPMFYSFLSSYAAG.

A disordered region spans residues 148-173 (KITHRYSVRDARKTQLSTSDSEANSD). Position 164 is a phosphoserine (serine 164). At threonine 165 the chain carries Phosphothreonine. Serine 166 is subject to Phosphoserine. The stretch at 662–700 (ELSSSLSSPSYRFQGILPSSGSEDLLWKWDALKAYQNFV) is one WD 1 repeat. Residues 1181–1190 (AMTEKSHQSA) are compositionally biased toward basic and acidic residues. Disordered stretches follow at residues 1181–1203 (AMTE…FSEE) and 1221–1256 (YEAD…SPND). The segment covering 1221–1238 (YEADSESNPEDGETQDDG) has biased composition (acidic residues). Over residues 1246–1256 (EGFSASSSPND) the composition is skewed to polar residues. Phosphoserine occurs at positions 1509 and 1510. The stretch at 1582-1626 (SQENIFLPSKWQHLVLTYLQQPQGKRRIHGKISIWVSGQRKPDVT) is one WD 2 repeat. 5 positions are modified to phosphoserine: serine 2105, serine 2124, serine 2213, serine 2217, and serine 2264. Over residues 2205-2215 (KQLGAEPRSED) the composition is skewed to basic and acidic residues. The disordered stretch occupies residues 2205 to 2224 (KQLGAEPRSEDDSPGDESCP). The 107-residue stretch at 3009–3115 (AASESIRVNR…VRDDVYHNIL (107 aa)) folds into the BEACH-type PH domain. The 303-residue stretch at 3120-3422 (PNLLEYGNIT…QLFHMAHVSR (303 aa)) folds into the BEACH domain. WD repeat units lie at residues 3563-3602 (SQQY…STPS), 3614-3653 (GHTE…YVQS), 3656-3699 (GHKS…VGHV), 3700-3744 (HCRE…PVRE), and 3749-3788 (KSNK…RLKQ).

In terms of assembly, interacts with CPAP, LIP8 and ZNF521. Abundantly expressed in adult and fetal thymus, peripheral blood leukocytes, bone marrow and several regions of the adult brain.

The protein resides in the cytoplasm. Adapter protein that regulates and/or fission of intracellular vesicles such as lysosomes. Might regulate trafficking of effectors involved in exocytosis. In cytotoxic T-cells and natural killer (NK) cells, has role in the regulation of size, number and exocytosis of lytic granules. In macrophages and dendritic cells, regulates phagosome maturation by controlling the conversion of early phagosomal compartments into late phagosomes. In macrophages and dendritic cells, specifically involved in TLR3- and TLR4-induced production of pro-inflammatory cytokines by regulating the endosomal TLR3- TICAM1/TRIF and TLR4- TICAM1/TRIF signaling pathways. This Homo sapiens (Human) protein is Lysosomal-trafficking regulator (LYST).